A 426-amino-acid polypeptide reads, in one-letter code: Limonoid 21-O-acetyltransferse (426 aa).

Active-site proton acceptor residues include His152 and Asp365.

This sequence belongs to the plant acyltransferase family. As to quaternary structure, monomer. Expressed in maturing fruits and in juice vesicles.

It carries out the reaction isomeliandiol + acetyl-CoA = 21-O-acetyl-isomeliandiol + CoA. Its pathway is secondary metabolite biosynthesis; terpenoid biosynthesis. Its function is as follows. Acetyltransferase involved in the biosynthesis of limonoids triterpene natural products such as limonin, a compound with insecticidal activity responsible for the bitter taste in citrus. Catalyzes the formation of 21-O-acetyl-isomeliandiol from isomeliandiol. This Citrus sinensis (Sweet orange) protein is Limonoid 21-O-acetyltransferse.